Consider the following 644-residue polypeptide: Major core protein OPG129 (644 aa).

A propeptide spanning residues 1-61 is cleaved from the precursor; that stretch reads MEAVVNSDVF…IVDDDFISAG (61 aa). Residues 61–80 are disordered; sequence GARNQRTKPKRAGNDQAQQT.

The protein belongs to the orthopoxvirus OPG129 family. The 73-kDa precursor is cleaved to a mature protein of 60 kDa during virion maturation. Proteolytic cleavage of major core proteins OPG129, OPG136, and OPG098, which occurs at a late stage of core formation, is required for production of infectious mature virions (MV).

Its subcellular location is the virion. Major component of the virion core that undergoes proteolytic processing during the immature virion (IV) to mature virion (MV) transition. Essential for the formation of a structurally normal core. The sequence is that of Major core protein OPG129 (OPG129) from Variola virus (isolate Human/India/Ind3/1967) (VARV).